Consider the following 119-residue polypeptide: uncharacterized protein (119 aa).

This is an uncharacterized protein from Dactylococcopsis salina (Myxobaktron salinum).